The primary structure comprises 218 residues: Thiamine-phosphate synthase (218 aa).

4-amino-2-methyl-5-(diphosphooxymethyl)pyrimidine contacts are provided by residues 43 to 47 (QLRDK) and Asn75. Asp76 and Asp95 together coordinate Mg(2+). Ser114 is a 4-amino-2-methyl-5-(diphosphooxymethyl)pyrimidine binding site. 141 to 143 (TPT) provides a ligand contact to 2-[(2R,5Z)-2-carboxy-4-methylthiazol-5(2H)-ylidene]ethyl phosphate. Lys144 provides a ligand contact to 4-amino-2-methyl-5-(diphosphooxymethyl)pyrimidine. Gly172 contributes to the 2-[(2R,5Z)-2-carboxy-4-methylthiazol-5(2H)-ylidene]ethyl phosphate binding site.

This sequence belongs to the thiamine-phosphate synthase family. Mg(2+) is required as a cofactor.

The enzyme catalyses 2-[(2R,5Z)-2-carboxy-4-methylthiazol-5(2H)-ylidene]ethyl phosphate + 4-amino-2-methyl-5-(diphosphooxymethyl)pyrimidine + 2 H(+) = thiamine phosphate + CO2 + diphosphate. It carries out the reaction 2-(2-carboxy-4-methylthiazol-5-yl)ethyl phosphate + 4-amino-2-methyl-5-(diphosphooxymethyl)pyrimidine + 2 H(+) = thiamine phosphate + CO2 + diphosphate. It catalyses the reaction 4-methyl-5-(2-phosphooxyethyl)-thiazole + 4-amino-2-methyl-5-(diphosphooxymethyl)pyrimidine + H(+) = thiamine phosphate + diphosphate. The protein operates within cofactor biosynthesis; thiamine diphosphate biosynthesis; thiamine phosphate from 4-amino-2-methyl-5-diphosphomethylpyrimidine and 4-methyl-5-(2-phosphoethyl)-thiazole: step 1/1. Condenses 4-methyl-5-(beta-hydroxyethyl)thiazole monophosphate (THZ-P) and 2-methyl-4-amino-5-hydroxymethyl pyrimidine pyrophosphate (HMP-PP) to form thiamine monophosphate (TMP). In Thermobifida fusca (strain YX), this protein is Thiamine-phosphate synthase.